Reading from the N-terminus, the 427-residue chain is MHILSISLMAVLPAIALAGLCGVEPDAGLLDQRLNLYKGQQNFAVSMLNVIRQSTPNENVFFSPYSTYHALLLAYFGSSGDTEKELAKVLHLDWADSKEVVRSAYILEKMNRKERQSKMPLEFSSADRIFFANDLHVTECARNRLAEEVQQIDFKSQTEESRKQINDWIAKQTHDQIRNMLSADEITPRTRLVLANAAYLKGQWLSQFKTEKTVPMPFYTSPSNYSLVSMMQQKGTFLLNVDEQLRAHVLQLPYRTVFESQEKEDSSPDENSDISMVLILPPFNSNSLEDVLSRLNADSLDDSLKQAMPREIEVSLPKFEFEQRLELNPILAKMGVSKMFDESVATFDDLTSETISIGDSKHVAKIKVDEEGSTAAAATVLFTYRSARPVEPAKFECNHPFLFVIYDRTSRSILFTGIYRDPKTIKQ.

An N-terminal signal peptide occupies residues 1 to 18; it reads MHILSISLMAVLPAIALA. N-linked (GlcNAc...) asparagine glycosylation is present at Asn-224.

This sequence belongs to the serpin family. Expressed in nurse cells and oocytes. Expressed in wings.

The protein localises to the secreted. Its function is as follows. Serine protease inhibitor with activity toward trypsin. Negatively regulates the Toll signaling pathway and suppresses the expression of the antifungal peptide drosomycin. Its negative regulation of the Toll signaling pathway also results in the inhibition of the melanization immune response via the phenoloxidase (PPO1) cascade. Essential for unfolding and expansion of the wings after emergence from the pupal case. May regulate the Toll pathway by blocking the proteolysis of the Toll ligand spz. The sequence is that of Serine protease inhibitor 88Ea from Drosophila melanogaster (Fruit fly).